A 238-amino-acid polypeptide reads, in one-letter code: Putative csd-like protein HI_1343 (238 aa).

At K146 the chain carries N6-(pyridoxal phosphate)lysine.

It belongs to the class-V pyridoxal-phosphate-dependent aminotransferase family. Csd subfamily.

The protein is Putative csd-like protein HI_1343 of Haemophilus influenzae (strain ATCC 51907 / DSM 11121 / KW20 / Rd).